The following is a 323-amino-acid chain: Sporulation-delaying protein SdpB (323 aa).

Helical transmembrane passes span 27–49, 70–92, 112–134, 155–177, 219–241, and 248–270; these read LLGFSTLLVLLFNSTDILFSYSA, SINFEIIRYLMIFILTLVVIGWR, LTIDGGEQIATVLSFLILPVTLL, TVLFYIMTIIKIQVFIIYLNAAL, IVVITWLVTIFELFLAASIISNI, and LVLGILFHIGIIFSIGIVSFGLI.

It localises to the cell membrane. Functionally, required for the maturation of SdpC to SDP. Not required for SdpC signal peptide cleavage, secretion from the cell or disulfide bond formation. The sequence is that of Sporulation-delaying protein SdpB from Bacillus subtilis (strain 168).